Reading from the N-terminus, the 1025-residue chain is Adenylate-forming reductase 03009 (1025 aa).

The tract at residues 38-422 (FEFHAKSNPQ…LGRIDNQVKI (385 aa)) is adenylation (A) domain. AMP is bound by residues 332–333 (VT) and 412–415 (HLGR). Residues 556–638 (SLGSTNTKIS…AILIWICVKK (83 aa)) form a thiolation and peptide carrier (T) domain region. The segment at 682-900 (FIRRTAARVY…PPTKLWVKGV (219 aa)) is thioester reductase (TR) domain. Residues 685 to 688 (RTAA), 769 to 771 (SAL), and Y840 each bind NADP(+).

The protein belongs to the adenylate-forming reductase family.

Functionally, adenylate-forming reductase, a natural product biosynthesis enzyme that resembles non-ribosomal peptide synthetases, yet serves to modify one substrate, rather than to condense two or more building blocks. The A-domain preferentially accepts L-serine, L-alanine and L-valine as substrates. The natural product of the enzyme is not yet known. In Coprinopsis cinerea (strain Okayama-7 / 130 / ATCC MYA-4618 / FGSC 9003) (Inky cap fungus), this protein is Adenylate-forming reductase 03009.